The chain runs to 333 residues: Adenosine deaminase (333 aa).

Positions 12 and 14 each coordinate Zn(2+). Histidine 14, aspartate 16, and glycine 170 together coordinate substrate. Position 197 (histidine 197) interacts with Zn(2+). The Proton donor role is filled by glutamate 200. Aspartate 278 serves as a coordination point for Zn(2+). Position 279 (aspartate 279) interacts with substrate.

The protein belongs to the metallo-dependent hydrolases superfamily. Adenosine and AMP deaminases family. Adenosine deaminase subfamily. Zn(2+) serves as cofactor.

The catalysed reaction is adenosine + H2O + H(+) = inosine + NH4(+). It carries out the reaction 2'-deoxyadenosine + H2O + H(+) = 2'-deoxyinosine + NH4(+). In terms of biological role, catalyzes the hydrolytic deamination of adenosine and 2-deoxyadenosine. The polypeptide is Adenosine deaminase (Proteus mirabilis (strain HI4320)).